Consider the following 99-residue polypeptide: UPF0235 protein ASA_3628 (99 aa).

It belongs to the UPF0235 family.

In Aeromonas salmonicida (strain A449), this protein is UPF0235 protein ASA_3628.